The chain runs to 91 residues: Potassium channel toxin Meg-beta-KTx1 (91 aa).

A signal peptide spans 1 to 19 (MQRNLVVLLFLGMVALSSC). Positions 20–27 (GLREKHFQ) are excised as a propeptide. One can recognise a BetaSPN-type CS-alpha/beta domain in the interval 54–91 (QFGCPAYQGYCDDHCQDIKKQEGFCHGFKCKCGIPMGF). 3 disulfide bridges follow: C57–C78, C64–C83, and C68–C85.

It belongs to the long chain scorpion toxin family. Class 1 subfamily. In terms of tissue distribution, expressed by the venom gland.

The protein localises to the secreted. In terms of biological role, inhibits voltage-gated potassium channel. The protein is Potassium channel toxin Meg-beta-KTx1 of Mesobuthus gibbosus (Mediterranean checkered scorpion).